A 300-amino-acid chain; its full sequence is Protein XRI1 (300 aa).

As to quaternary structure, interacts (via C-terminal domain) with MIP1.

It is found in the nucleus. In terms of biological role, required for mitotic division of the generative cell nucleus and the development of mature tricellular pollen grains, and for male and female meiosis. This is Protein XRI1 (XRI1) from Arabidopsis thaliana (Mouse-ear cress).